A 206-amino-acid chain; its full sequence is Ribosomal RNA small subunit methyltransferase G (206 aa).

S-adenosyl-L-methionine-binding positions include Gly-74, Leu-79, 125–126 (VE), and Arg-140.

This sequence belongs to the methyltransferase superfamily. RNA methyltransferase RsmG family.

The protein resides in the cytoplasm. It carries out the reaction guanosine(527) in 16S rRNA + S-adenosyl-L-methionine = N(7)-methylguanosine(527) in 16S rRNA + S-adenosyl-L-homocysteine. Functionally, specifically methylates the N7 position of guanine in position 527 of 16S rRNA. The protein is Ribosomal RNA small subunit methyltransferase G of Shewanella baltica (strain OS223).